Here is a 269-residue protein sequence, read N- to C-terminus: 5'-nucleotidase SurE (269 aa).

A divalent metal cation is bound by residues aspartate 11, aspartate 12, serine 43, and asparagine 101.

Belongs to the SurE nucleotidase family. A divalent metal cation serves as cofactor.

The protein resides in the cytoplasm. The enzyme catalyses a ribonucleoside 5'-phosphate + H2O = a ribonucleoside + phosphate. Functionally, nucleotidase that shows phosphatase activity on nucleoside 5'-monophosphates. This chain is 5'-nucleotidase SurE, found in Prochlorococcus marinus (strain MIT 9313).